Reading from the N-terminus, the 194-residue chain is Exopolysaccharide II synthesis transcriptional activator ExpG (194 aa).

Positions 49-184 (YFELARVMER…AFQTLHRLEL (136 aa)) constitute an HTH marR-type domain.

In terms of biological role, transcriptional activator of genes for galactoglucan synthesis (exopolysaccharide II or EPS II). The protein is Exopolysaccharide II synthesis transcriptional activator ExpG (expG) of Rhizobium meliloti (strain 1021) (Ensifer meliloti).